The chain runs to 762 residues: PHD finger protein 20-like protein 1 (762 aa).

Tudor domains are found at residues 11 to 71 (ITFE…LERP) and 85 to 141 (VDFK…EDAK). Disordered stretches follow at residues 178–231 (AKNK…TSSD), 289–359 (AEKK…CIKP), 383–411 (SVIN…RSQR), 536–559 (SLKL…EGTE), and 613–651 (LSGK…QHDY). The segment covering 193 to 211 (NKDKEERKWLKVPSKKEET) has biased composition (basic and acidic residues). Polar residues-rich tracts occupy residues 319 to 340 (DISS…SSGK) and 383 to 398 (SVIN…NSPR). Over residues 399-410 (SYKHSQRRRRSQ) the composition is skewed to basic residues. Residues 614-632 (SGKKKEKEKEKKEKKEKDH) show a composition bias toward basic and acidic residues. Residues 633-647 (KSKQKKKKKKKKKSK) show a composition bias toward basic residues.

Its subcellular location is the nucleus. Is a negative regulator of proteasomal degradation of methylated proteins. Involved in the maintainance of pluripotency of embryonic stem cells. In Gallus gallus (Chicken), this protein is PHD finger protein 20-like protein 1 (PHF20L1).